A 987-amino-acid polypeptide reads, in one-letter code: UPF0182 protein DIP0733 (987 aa).

Helical transmembrane passes span 19 to 39, 63 to 83, 115 to 135, 176 to 196, 212 to 234, 261 to 281, and 290 to 310; these read LTWL…VVDL, IGLF…AGWF, FLVV…QQAW, SVLL…LGGI, YAKV…SYWL, AKIV…SVIV, and ISTV…PIMM. A compositionally biased stretch (basic and acidic residues) spans 904-927; it reads DLGEAKGLKPESQNRDKPEDKEGK. The segment at 904-950 is disordered; that stretch reads DLGEAKGLKPESQNRDKPEDKEGKAPSTPSAPASGSGTTGEAIGKIN. The segment covering 928–943 has biased composition (low complexity); it reads APSTPSAPASGSGTTG.

The protein belongs to the UPF0182 family.

The protein resides in the cell membrane. This Corynebacterium diphtheriae (strain ATCC 700971 / NCTC 13129 / Biotype gravis) protein is UPF0182 protein DIP0733.